The following is a 150-amino-acid chain: Arginine repressor (150 aa).

The protein belongs to the ArgR family.

The protein resides in the cytoplasm. It participates in amino-acid biosynthesis; L-arginine biosynthesis [regulation]. Regulates arginine biosynthesis genes. This Staphylococcus epidermidis (strain ATCC 35984 / DSM 28319 / BCRC 17069 / CCUG 31568 / BM 3577 / RP62A) protein is Arginine repressor.